The sequence spans 120 residues: Large ribosomal subunit protein P3y (120 aa).

Gly residues predominate over residues Gly-81 to Glu-92. The segment at Gly-81 to Gly-120 is disordered. Basic and acidic residues predominate over residues Thr-97 to Glu-106.

Belongs to the eukaryotic ribosomal protein P1/P2 family.

Functionally, plays an important role in the elongation step of protein synthesis. The sequence is that of Large ribosomal subunit protein P3y (RPP3B) from Arabidopsis thaliana (Mouse-ear cress).